We begin with the raw amino-acid sequence, 238 residues long: MRPSDRRPDLLRPVTLETGVNRYAEGSCLASFGHTKVLVTASLEEGVPPFLRGKGQGWVTAEYGMLPRATHTRGRREAAQGKQSGRTQEIQRLIGRSLRAVVDLKALGERQITVDCDVVQADGGTRTAAITGAWVALRLATRYLLEEGVIATDPILDQVAAISCGVFSGTPVLDLDYEEDSNAEADANFVLTGAGDIVEIQATGEKRGFSEAEFEALFALARKGIGELCELQRAATGG.

Phosphate-binding positions include Arg86 and 124-126; that span reads GTR.

This sequence belongs to the RNase PH family. Homohexameric ring arranged as a trimer of dimers.

It catalyses the reaction tRNA(n+1) + phosphate = tRNA(n) + a ribonucleoside 5'-diphosphate. Its function is as follows. Phosphorolytic 3'-5' exoribonuclease that plays an important role in tRNA 3'-end maturation. Removes nucleotide residues following the 3'-CCA terminus of tRNAs; can also add nucleotides to the ends of RNA molecules by using nucleoside diphosphates as substrates, but this may not be physiologically important. Probably plays a role in initiation of 16S rRNA degradation (leading to ribosome degradation) during starvation. The polypeptide is Ribonuclease PH (Phenylobacterium zucineum (strain HLK1)).